The sequence spans 513 residues: Carboxyethyl-arginine beta-lactam-synthase (513 aa).

2 residues coordinate Mg(2+): Asp253 and Asp351.

Belongs to the asparagine synthetase family. As to quaternary structure, homodimer. The cofactor is Mg(2+).

The catalysed reaction is N(2)-(2-carboxyethyl)-L-arginine + ATP = deoxyamidinoproclavaminate + AMP + diphosphate + H(+). Its pathway is antibiotic biosynthesis; clavulanate biosynthesis; clavulanate from D-glyceraldehyde 3-phosphate and L-arginine: step 2/8. The protein is Carboxyethyl-arginine beta-lactam-synthase (bls) of Streptomyces clavuligerus.